We begin with the raw amino-acid sequence, 103 residues long: Nucleoid-associated protein SUN_2278 (103 aa).

This sequence belongs to the YbaB/EbfC family. As to quaternary structure, homodimer.

It is found in the cytoplasm. Its subcellular location is the nucleoid. Functionally, binds to DNA and alters its conformation. May be involved in regulation of gene expression, nucleoid organization and DNA protection. This is Nucleoid-associated protein SUN_2278 from Sulfurovum sp. (strain NBC37-1).